The primary structure comprises 309 residues: Aspartate carbamoyltransferase catalytic subunit (309 aa).

The carbamoyl phosphate site is built by arginine 54 and threonine 55. An L-aspartate-binding site is contributed by lysine 82. Residues arginine 104, histidine 132, and glutamine 135 each contribute to the carbamoyl phosphate site. 2 residues coordinate L-aspartate: arginine 165 and arginine 219. Residues glycine 260 and proline 261 each contribute to the carbamoyl phosphate site.

This sequence belongs to the aspartate/ornithine carbamoyltransferase superfamily. ATCase family. Heterododecamer (2C3:3R2) of six catalytic PyrB chains organized as two trimers (C3), and six regulatory PyrI chains organized as three dimers (R2).

It carries out the reaction carbamoyl phosphate + L-aspartate = N-carbamoyl-L-aspartate + phosphate + H(+). Its pathway is pyrimidine metabolism; UMP biosynthesis via de novo pathway; (S)-dihydroorotate from bicarbonate: step 2/3. In terms of biological role, catalyzes the condensation of carbamoyl phosphate and aspartate to form carbamoyl aspartate and inorganic phosphate, the committed step in the de novo pyrimidine nucleotide biosynthesis pathway. This chain is Aspartate carbamoyltransferase catalytic subunit, found in Parafrankia sp. (strain EAN1pec).